A 428-amino-acid chain; its full sequence is Enolase (428 aa).

Q163 is a (2R)-2-phosphoglycerate binding site. The active-site Proton donor is E205. Residues D242, E285, and D312 each coordinate Mg(2+). The (2R)-2-phosphoglycerate site is built by K337, R366, S367, and K388. K337 serves as the catalytic Proton acceptor.

It belongs to the enolase family. Requires Mg(2+) as cofactor.

It is found in the cytoplasm. The protein localises to the secreted. The protein resides in the cell surface. It carries out the reaction (2R)-2-phosphoglycerate = phosphoenolpyruvate + H2O. The protein operates within carbohydrate degradation; glycolysis; pyruvate from D-glyceraldehyde 3-phosphate: step 4/5. Its function is as follows. Catalyzes the reversible conversion of 2-phosphoglycerate (2-PG) into phosphoenolpyruvate (PEP). It is essential for the degradation of carbohydrates via glycolysis. The protein is Enolase of Rhodopirellula baltica (strain DSM 10527 / NCIMB 13988 / SH1).